The chain runs to 29 residues: Cyclotide cter-N (29 aa).

The segment at residues 1–29 is a cross-link (cyclopeptide (Gly-Asn)); sequence GSAFCGETCVLGTCYTPDCSCTALVCLKN. Intrachain disulfides connect Cys-5–Cys-19, Cys-9–Cys-21, and Cys-14–Cys-26.

Post-translationally, this is a cyclic peptide.

It is found in the secreted. Probably participates in a plant defense mechanism. This Clitoria ternatea (Butterfly pea) protein is Cyclotide cter-N.